We begin with the raw amino-acid sequence, 120 residues long: Large ribosomal subunit protein eL18 (120 aa).

This sequence belongs to the eukaryotic ribosomal protein eL18 family. As to quaternary structure, part of the 50S ribosomal subunit.

This Pyrococcus furiosus (strain ATCC 43587 / DSM 3638 / JCM 8422 / Vc1) protein is Large ribosomal subunit protein eL18.